Consider the following 231-residue polypeptide: Large ribosomal subunit protein uL1 (231 aa).

This sequence belongs to the universal ribosomal protein uL1 family. As to quaternary structure, part of the 50S ribosomal subunit.

Its function is as follows. Binds directly to 23S rRNA. The L1 stalk is quite mobile in the ribosome, and is involved in E site tRNA release. Functionally, protein L1 is also a translational repressor protein, it controls the translation of the L11 operon by binding to its mRNA. This is Large ribosomal subunit protein uL1 from Pseudomonas entomophila (strain L48).